The sequence spans 242 residues: Biosynthetic peptidoglycan transglycosylase (242 aa).

Residues F15–S35 traverse the membrane as a helical segment.

Belongs to the glycosyltransferase 51 family.

Its subcellular location is the cell inner membrane. The enzyme catalyses [GlcNAc-(1-&gt;4)-Mur2Ac(oyl-L-Ala-gamma-D-Glu-L-Lys-D-Ala-D-Ala)](n)-di-trans,octa-cis-undecaprenyl diphosphate + beta-D-GlcNAc-(1-&gt;4)-Mur2Ac(oyl-L-Ala-gamma-D-Glu-L-Lys-D-Ala-D-Ala)-di-trans,octa-cis-undecaprenyl diphosphate = [GlcNAc-(1-&gt;4)-Mur2Ac(oyl-L-Ala-gamma-D-Glu-L-Lys-D-Ala-D-Ala)](n+1)-di-trans,octa-cis-undecaprenyl diphosphate + di-trans,octa-cis-undecaprenyl diphosphate + H(+). It participates in cell wall biogenesis; peptidoglycan biosynthesis. Peptidoglycan polymerase that catalyzes glycan chain elongation from lipid-linked precursors. In Shigella sonnei (strain Ss046), this protein is Biosynthetic peptidoglycan transglycosylase.